The sequence spans 205 residues: GTP cyclohydrolase-2 (205 aa).

49 to 53 (RIHSE) provides a ligand contact to GTP. 3 residues coordinate Zn(2+): C54, C65, and C67. Residues Q70, 92–94 (EGR), and T114 each bind GTP. The active-site Proton acceptor is D126. Catalysis depends on R128, which acts as the Nucleophile. Residues T149 and K154 each coordinate GTP.

This sequence belongs to the GTP cyclohydrolase II family. Zn(2+) serves as cofactor.

The enzyme catalyses GTP + 4 H2O = 2,5-diamino-6-hydroxy-4-(5-phosphoribosylamino)-pyrimidine + formate + 2 phosphate + 3 H(+). It participates in cofactor biosynthesis; riboflavin biosynthesis; 5-amino-6-(D-ribitylamino)uracil from GTP: step 1/4. Its function is as follows. Catalyzes the conversion of GTP to 2,5-diamino-6-ribosylamino-4(3H)-pyrimidinone 5'-phosphate (DARP), formate and pyrophosphate. In Shewanella piezotolerans (strain WP3 / JCM 13877), this protein is GTP cyclohydrolase-2.